An 89-amino-acid polypeptide reads, in one-letter code: HssA/B-like protein 16 (89 aa).

This sequence belongs to the hssA/B family.

In Dictyostelium discoideum (Social amoeba), this protein is HssA/B-like protein 16 (hssl16).